The chain runs to 152 residues: ESAT-6 secretion machinery protein EssA (152 aa).

Residues 1 to 114 (MLMNSVIALT…PYIQNKQEKK (114 aa)) lie on the Cytoplasmic side of the membrane. A helical membrane pass occupies residues 115 to 135 (IFPYILMSVGAFLTLGFVIFS). Over 136 to 152 (IHKGRRTKNESARKSNI) the chain is Extracellular.

This sequence belongs to the EssA family.

It is found in the cell membrane. In terms of biological role, component of the ESAT-6 secretion system (Ess). Required for the secretion of EsxA and EsxB. The chain is ESAT-6 secretion machinery protein EssA from Staphylococcus aureus (strain Mu50 / ATCC 700699).